Reading from the N-terminus, the 249-residue chain is MVEMNFKVDAFEGPLDLLLHLIGQLEVDIYDIPMAEITDQYMEFVHTMQEMELDVASEYLVMAATLLAIKSKMLLPKQELEIDYDTLEEEEDPRDALVEKLMEYKRFKEAAKELKEKEAERSFYFSKPPMDLAEYDDGTKVAELDVSLNDMLSAFNKMLRRKKLNKPLHTRITTQEISIDDRMNSVLGKLNQQKNHRLRFDELFEEQTKEQLVVTFLALLELMKRKLVEVEQSESFADLYVQGKGEELS.

The protein belongs to the ScpA family. In terms of assembly, component of a cohesin-like complex composed of ScpA, ScpB and the Smc homodimer, in which ScpA and ScpB bind to the head domain of Smc. The presence of the three proteins is required for the association of the complex with DNA.

It is found in the cytoplasm. Participates in chromosomal partition during cell division. May act via the formation of a condensin-like complex containing Smc and ScpB that pull DNA away from mid-cell into both cell halves. This Listeria welshimeri serovar 6b (strain ATCC 35897 / DSM 20650 / CCUG 15529 / CIP 8149 / NCTC 11857 / SLCC 5334 / V8) protein is Segregation and condensation protein A.